We begin with the raw amino-acid sequence, 545 residues long: CTP synthase (545 aa).

Positions 1 to 266 (MTTRYIFVTG…DELVIKRFNI (266 aa)) are amidoligase domain. S14 provides a ligand contact to CTP. UTP is bound at residue S14. ATP contacts are provided by residues 15-20 (SLGKGI) and D72. Residues D72 and E140 each coordinate Mg(2+). Residues 147–149 (DIE), 187–192 (KTKPTQ), and K223 contribute to the CTP site. UTP-binding positions include 187–192 (KTKPTQ) and K223. 239–241 (KDV) is an ATP binding site. One can recognise a Glutamine amidotransferase type-1 domain in the interval 291 to 542 (TIGMVGKYIE…IAASLSHQKR (252 aa)). Residue G352 participates in L-glutamine binding. C379 acts as the Nucleophile; for glutamine hydrolysis in catalysis. L-glutamine-binding positions include 380–383 (LGMQ), E403, and R470. Catalysis depends on residues H515 and E517.

It belongs to the CTP synthase family. In terms of assembly, homotetramer.

It catalyses the reaction UTP + L-glutamine + ATP + H2O = CTP + L-glutamate + ADP + phosphate + 2 H(+). It carries out the reaction L-glutamine + H2O = L-glutamate + NH4(+). The catalysed reaction is UTP + NH4(+) + ATP = CTP + ADP + phosphate + 2 H(+). The protein operates within pyrimidine metabolism; CTP biosynthesis via de novo pathway; CTP from UDP: step 2/2. Its activity is regulated as follows. Allosterically activated by GTP, when glutamine is the substrate; GTP has no effect on the reaction when ammonia is the substrate. The allosteric effector GTP functions by stabilizing the protein conformation that binds the tetrahedral intermediate(s) formed during glutamine hydrolysis. Inhibited by the product CTP, via allosteric rather than competitive inhibition. In terms of biological role, catalyzes the ATP-dependent amination of UTP to CTP with either L-glutamine or ammonia as the source of nitrogen. Regulates intracellular CTP levels through interactions with the four ribonucleotide triphosphates. In Shewanella denitrificans (strain OS217 / ATCC BAA-1090 / DSM 15013), this protein is CTP synthase.